We begin with the raw amino-acid sequence, 358 residues long: Tribbles homolog 3 (358 aa).

Residues 1 to 54 form a disordered region; that stretch reads MRATPLAAPAGSLSRKKRLELDDNLDTERPVQKRARSGPQPRLPPCLLPLSPPT. Residues 1–127 are interaction with DDIT3/CHOP; that stretch reads MRATPLAAPA…KHVARPTEVL (127 aa). Ser-12 carries the post-translational modification Phosphoserine. The span at 41–54 shows a compositional bias: pro residues; sequence PRLPPCLLPLSPPT. Positions 68 to 316 constitute a Protein kinase domain; it reads LGPYVLLEPE…TGILLHPWLR (249 aa).

It belongs to the protein kinase superfamily. CAMK Ser/Thr protein kinase family. Tribbles subfamily. In terms of assembly, interacts with AKT1, AKT2, MAP2K1 and MAP2K7. Interacts with ATF4. Interacts with DDIT3/CHOP and inhibits its interaction with EP300/P300. Interacts with APOBEC3C. Interacts (via N-terminus) with APOBEC3A. Interacts with RELA. Highest expression in liver, pancreas, peripheral blood leukocytes and bone marrow. Also highly expressed in a number of primary lung, colon and breast tumors. Expressed in spleen, thymus, and prostate and is undetectable in other examined tissues, including testis, ovary, small intestine, colon, leukocyte, heart, brain, placenta, lung, skeletal muscle, and kidney.

It localises to the nucleus. Inactive protein kinase which acts as a regulator of the integrated stress response (ISR), a process for adaptation to various stress. Inhibits the transcriptional activity of DDIT3/CHOP and is involved in DDIT3/CHOP-dependent cell death during ER stress. May play a role in programmed neuronal cell death but does not appear to affect non-neuronal cells. Acts as a negative feedback regulator of the ATF4-dependent transcription during the ISR: while TRIB3 expression is promoted by ATF4, TRIB3 protein interacts with ATF4 and inhibits ATF4 transcription activity. Disrupts insulin signaling by binding directly to Akt kinases and blocking their activation. May bind directly to and mask the 'Thr-308' phosphorylation site in AKT1. Interacts with the NF-kappa-B transactivator p65 RELA and inhibits its phosphorylation and thus its transcriptional activation activity. Interacts with MAPK kinases and regulates activation of MAP kinases. Can inhibit APOBEC3A editing of nuclear DNA. This chain is Tribbles homolog 3 (TRIB3), found in Homo sapiens (Human).